Consider the following 360-residue polypeptide: Phospho-N-acetylmuramoyl-pentapeptide-transferase (360 aa).

10 helical membrane-spanning segments follow: residues 21-41, 73-93, 98-118, 132-152, 168-188, 199-219, 236-256, 263-283, 288-308, and 338-358; these read YITF…LWIG, TMGG…WADL, IWFV…DDYW, WKYF…YAVG, VMPQ…VGTS, GLAI…AWAT, AGEL…FLWY, VFMG…IAVL, LLLV…ILQV, and VIVR…VTLK.

The protein belongs to the glycosyltransferase 4 family. MraY subfamily. Requires Mg(2+) as cofactor.

The protein localises to the cell inner membrane. It catalyses the reaction UDP-N-acetyl-alpha-D-muramoyl-L-alanyl-gamma-D-glutamyl-meso-2,6-diaminopimeloyl-D-alanyl-D-alanine + di-trans,octa-cis-undecaprenyl phosphate = di-trans,octa-cis-undecaprenyl diphospho-N-acetyl-alpha-D-muramoyl-L-alanyl-D-glutamyl-meso-2,6-diaminopimeloyl-D-alanyl-D-alanine + UMP. Its pathway is cell wall biogenesis; peptidoglycan biosynthesis. Functionally, catalyzes the initial step of the lipid cycle reactions in the biosynthesis of the cell wall peptidoglycan: transfers peptidoglycan precursor phospho-MurNAc-pentapeptide from UDP-MurNAc-pentapeptide onto the lipid carrier undecaprenyl phosphate, yielding undecaprenyl-pyrophosphoryl-MurNAc-pentapeptide, known as lipid I. In Actinobacillus pleuropneumoniae serotype 5b (strain L20), this protein is Phospho-N-acetylmuramoyl-pentapeptide-transferase.